A 404-amino-acid polypeptide reads, in one-letter code: Putative replication protein C (404 aa).

The tract at residues 249-287 is disordered; that stretch reads PDQIERHKQNSHPESTNEFEPSSREEQGERPSPAIEPQR.

The protein to A.rhizogenes possible replication protein C (RepC).

The protein is Putative replication protein C of Sinorhizobium fredii (strain NBRC 101917 / NGR234).